Reading from the N-terminus, the 521-residue chain is MSL complex subunit 3 (521 aa).

The Tudor-knot domain maps to 13-71 (SGEKVLCFEPDPTKARVLYDAKIVDVIVGKDEKGRKIPEYLIHFNGWNRSWDRWAAEDH). Disordered stretches follow at residues 114–166 (KGLP…TRRE) and 298–409 (ATST…PSKE). Residues 139–149 (KDEEISEESDI) show a composition bias toward acidic residues. Positions 150–166 (EEKTEVKEEPELQTRRE) are enriched in basic and acidic residues. The MRG domain maps to 168 to 517 (EERTITIEIP…CEAHYSTKNP (350 aa)). The interval 290-440 (FFLPIKESAT…WKLVPDNYPP (151 aa)) is required for the histone acetyltransferase activity of the MSL complex. Phosphoserine is present on residues Ser309 and Ser311. Positions 316–329 (NPSTPQSTESQPTT) are enriched in low complexity. Phosphoserine occurs at positions 367 and 400. Thr405 carries the post-translational modification Phosphothreonine. A phosphoserine mark is found at Ser407 and Ser411.

As to quaternary structure, component of the MSL histone acetyltransferase complex at least composed of the KAT8/MOF, MSL1/hampin, MSL2 and MSL3. Interacts (via the MRG domain) with MSL1 and KAT8/MOF. As to expression, expressed in many tissues including liver, pancreas, heart, lung, kidney, skeletal muscle, brain, and placenta, with highest expression in skeletal muscle and heart.

It is found in the nucleus. Its function is as follows. Non-catalytic component of the MSL histone acetyltransferase complex, a multiprotein complex that mediates the majority of histone H4 acetylation at 'Lys-16' (H4K16ac), an epigenetic mark that prevents chromatin compaction. The MSL complex is required for chromosome stability and genome integrity by maintaining homeostatic levels of H4K16ac. The MSL complex is also involved in gene dosage by promoting up-regulation of genes expressed by the X chromosome. X up-regulation is required to compensate for autosomal biallelic expression. The MSL complex also participates in gene dosage compensation by promoting expression of Tsix non-coding RNA. Acts as a histone reader that specifically recognizes and binds histone H4 monomethylated at 'Lys-20' (H4K20Me1) in a DNA-dependent manner and is proposed to be involved in chromosomal targeting of the MSL complex. May play a role X inactivation in females. This Homo sapiens (Human) protein is MSL complex subunit 3.